Reading from the N-terminus, the 214-residue chain is MRKRISAIIMTLFMVFMSCNNGGPELKSDEVAKSDGTVLDLAKVSKKIKEASAFAASVKEVETLVKSVDELAKAIGKKIKNDGGLDTEAGQNGSLIAGVHSVVSAVKIKVGALETTSGISNELKTKITEVKSKAEAFLNKLKDGHTELGKKDASDDDTKKAIKKDNSDKTKGASELEALNTAVDALLKAAEGEVEAAIKELTAPVKAEKPSQNN.

An N-terminal signal peptide occupies residues 1 to 18; sequence MRKRISAIIMTLFMVFMS. C19 carries N-palmitoyl cysteine lipidation. A lipid anchor (S-diacylglycerol cysteine) is attached at C19. The disordered stretch occupies residues 146 to 172; the sequence is TELGKKDASDDDTKKAIKKDNSDKTKG.

It belongs to the variable small protein (Vsp) family.

It localises to the cell outer membrane. In terms of biological role, the Vlp and Vsp proteins are antigenically distinct proteins, only one vlp or vsp gene is transcriptionally active at any one time. Switching between these genes is a mechanism of host immune response evasion. The protein is Variable small protein 24 of Borrelia hermsii.